Here is a 605-residue protein sequence, read N- to C-terminus: Elongation factor 4 (605 aa).

A tr-type G domain is found at 9 to 192 (HHIRNFCIIA…AIVKRVPAPS (184 aa)). GTP contacts are provided by residues 21-26 (DHGKST) and 139-142 (NKID).

Belongs to the TRAFAC class translation factor GTPase superfamily. Classic translation factor GTPase family. LepA subfamily.

The protein localises to the cell inner membrane. The enzyme catalyses GTP + H2O = GDP + phosphate + H(+). In terms of biological role, required for accurate and efficient protein synthesis under certain stress conditions. May act as a fidelity factor of the translation reaction, by catalyzing a one-codon backward translocation of tRNAs on improperly translocated ribosomes. Back-translocation proceeds from a post-translocation (POST) complex to a pre-translocation (PRE) complex, thus giving elongation factor G a second chance to translocate the tRNAs correctly. Binds to ribosomes in a GTP-dependent manner. This chain is Elongation factor 4, found in Chlorobium phaeobacteroides (strain DSM 266 / SMG 266 / 2430).